Reading from the N-terminus, the 214-residue chain is Thymidylate kinase (214 aa).

7 to 14 (GIDGAGKS) is a binding site for ATP.

Belongs to the thymidylate kinase family.

The enzyme catalyses dTMP + ATP = dTDP + ADP. Functionally, phosphorylation of dTMP to form dTDP in both de novo and salvage pathways of dTTP synthesis. The protein is Thymidylate kinase of Chlorobaculum tepidum (strain ATCC 49652 / DSM 12025 / NBRC 103806 / TLS) (Chlorobium tepidum).